The sequence spans 62 residues: DNA-binding protein 7b (62 aa).

Belongs to the 7 kDa DNA-binding/endoribonuclease P2 family. As to quaternary structure, monomer.

The protein resides in the cytoplasm. Its function is as follows. Can constrain negative DNA supercoils. May be involved in maintaining the integrity of the genome at high temperature. In Acidianus hospitalis (strain W1), this protein is DNA-binding protein 7b.